Consider the following 332-residue polypeptide: Ribose operon repressor (332 aa).

An HTH lacI-type domain is found at 2–56 (ATMKDIARLAQVSTSTVSHVINGSRFVSDEIREKVMRIVAELNYTPSAVARSLKV). The segment at residues 4–23 (MKDIARLAQVSTSTVSHVIN) is a DNA-binding region (H-T-H motif).

In terms of biological role, transcriptional repressor for the ribose rbsDACBK operon. The polypeptide is Ribose operon repressor (rbsR) (Haemophilus influenzae (strain ATCC 51907 / DSM 11121 / KW20 / Rd)).